The primary structure comprises 215 residues: Recombination protein RecR (215 aa).

Residues 74–89 (CQRCGHLSADPICDIC) form a C4-type zinc finger. The region spanning 97–191 (GVICVVADSR…RVTRIAYGLP (95 aa)) is the Toprim domain.

This sequence belongs to the RecR family.

May play a role in DNA repair. It seems to be involved in an RecBC-independent recombinational process of DNA repair. It may act with RecF and RecO. The polypeptide is Recombination protein RecR (Synechococcus sp. (strain RCC307)).